The following is a 163-amino-acid chain: Ubiquitin-like protein 1-ribosomal protein eS31 fusion protein (163 aa).

The Ubiquitin-like domain maps to 1 to 70 (MVFVKTLHRT…IYVNLELLGG (70 aa)). Gly-70 participates in a covalent cross-link: Glycyl lysine isopeptide (Gly-Lys) (interchain with K-? in acceptor proteins). The segment at 115–138 (CQQPSCGGGVFMAQHANRHYCGRC) adopts a C4-type zinc-finger fold.

It in the N-terminal section; belongs to the ubiquitin family. The protein in the C-terminal section; belongs to the eukaryotic ribosomal protein eS31 family.

This Caenorhabditis elegans protein is Ubiquitin-like protein 1-ribosomal protein eS31 fusion protein.